The following is a 326-amino-acid chain: tRNA-dihydrouridine(20/20a) synthase (326 aa).

FMN contacts are provided by residues proline 11–leucine 13 and glutamine 63. The Proton donor role is filled by cysteine 93. FMN is bound by residues lysine 132, histidine 165, asparagine 205–glycine 207, and glycine 227–arginine 228.

The protein belongs to the Dus family. DusA subfamily. FMN serves as cofactor.

The catalysed reaction is 5,6-dihydrouridine(20) in tRNA + NADP(+) = uridine(20) in tRNA + NADPH + H(+). The enzyme catalyses 5,6-dihydrouridine(20) in tRNA + NAD(+) = uridine(20) in tRNA + NADH + H(+). It catalyses the reaction 5,6-dihydrouridine(20a) in tRNA + NADP(+) = uridine(20a) in tRNA + NADPH + H(+). It carries out the reaction 5,6-dihydrouridine(20a) in tRNA + NAD(+) = uridine(20a) in tRNA + NADH + H(+). Its function is as follows. Catalyzes the synthesis of 5,6-dihydrouridine (D), a modified base found in the D-loop of most tRNAs, via the reduction of the C5-C6 double bond in target uridines. Specifically modifies U20 and U20a in tRNAs. In Vibrio vulnificus (strain CMCP6), this protein is tRNA-dihydrouridine(20/20a) synthase.